Consider the following 345-residue polypeptide: Inositol phosphoceramide mannosyltransferase 2 (345 aa).

Residues 4 to 24 (VIYKFAVFAAVNFFLMSSIVL) form a helical membrane-spanning segment. Residue asparagine 55 is glycosylated (N-linked (GlcNAc...) asparagine). The chain crosses the membrane as a helical span at residues 220 to 240 (YWLPYLTIMLSTGPLSISFLW). N-linked (GlcNAc...) asparagine glycosylation occurs at asparagine 269. The chain crosses the membrane as a helical span at residues 296–316 (LAYVIVAGFCLYFILSYMFFS).

Belongs to the glycosyltransferase 32 family.

It is found in the golgi apparatus. The protein resides in the cis-Golgi network membrane. The protein localises to the trans-Golgi network membrane. In terms of biological role, with imt1 and imt3, is required for the synthesis of mannosyl phosphorylinositol ceramide (MIPC). Catalyzes the addition of mannosyl to phosphorylinositol ceramide (IPC). MIPC is essential for cell morphology, cell-surface distribution of ergosterol, localization for plasma-membrane transporters, and lipid-raft-mediated endocytosis of plasma membrane proteins to the vacuole. This chain is Inositol phosphoceramide mannosyltransferase 2, found in Schizosaccharomyces pombe (strain 972 / ATCC 24843) (Fission yeast).